Consider the following 477-residue polypeptide: Acetolactate synthase small subunit 2, chloroplastic (477 aa).

Residues 1–53 (MAATTTATSLFSSRLHFQNQNQGYGFPAKTPNSLQVNQIIDGRKMRNATVLSA) constitute a chloroplast transit peptide. ACT domains are found at residues 78-150 (TISV…DLSK) and 309-383 (TLSL…NITH). L-valine-binding residues include aspartate 85, isoleucine 89, isoleucine 90, asparagine 103, isoleucine 104, asparagine 316, valine 320, leucine 321, asparagine 334, and isoleucine 335.

Belongs to the acetolactate synthase small subunit family. In terms of assembly, the acetolactate synthase complex contains 4 homodimers of the large catalytic subunits, and 1 homotetramer of the small regulatory subunits. In terms of tissue distribution, expressed in roots in the vascular tissuem in cells around the quiescent center, in floral organs at the tips of young siliques and in the joint region between the silique and the pedicel. Barely detectable in mature leaves or siliques.

It localises to the plastid. Its subcellular location is the chloroplast. The protein resides in the peroxisome. Its pathway is amino-acid biosynthesis; L-isoleucine biosynthesis; L-isoleucine from 2-oxobutanoate: step 1/4. The protein operates within amino-acid biosynthesis; L-valine biosynthesis; L-valine from pyruvate: step 1/4. Its function is as follows. Regulatory subunit of acetohydroxy-acid synthase. Involved in the feed-back inhibition by branched-chain amino acids but not in herbicide tolerance. May play a role in valine and isoleucine-mediated feedback inhibition in roots. In vitro, inhibited by valine, but not leucine or isoleucine. Required for reproductive development and sodium homeostasis. This Arabidopsis thaliana (Mouse-ear cress) protein is Acetolactate synthase small subunit 2, chloroplastic.